The chain runs to 813 residues: Leucine--tRNA ligase (813 aa).

The short motif at 40–51 (SYPSGSKLHAGH) is the 'HIGH' region element. The short motif at 572 to 576 (KMSKS) is the 'KMSKS' region element. Residue Lys-575 coordinates ATP.

Belongs to the class-I aminoacyl-tRNA synthetase family.

It localises to the cytoplasm. The catalysed reaction is tRNA(Leu) + L-leucine + ATP = L-leucyl-tRNA(Leu) + AMP + diphosphate. In Clostridium botulinum (strain ATCC 19397 / Type A), this protein is Leucine--tRNA ligase.